Consider the following 163-residue polypeptide: Nucleotide-binding protein DvMF_3058 (163 aa).

The protein belongs to the YajQ family.

Functionally, nucleotide-binding protein. The sequence is that of Nucleotide-binding protein DvMF_3058 from Nitratidesulfovibrio vulgaris (strain DSM 19637 / Miyazaki F) (Desulfovibrio vulgaris).